The chain runs to 555 residues: Urocanate hydratase (555 aa).

NAD(+)-binding positions include 51–52 (GG), glutamine 129, 175–177 (GMG), glutamate 195, 262–266 (QTSAH), 272–273 (YL), and tyrosine 321. Cysteine 409 is an active-site residue. Glycine 491 lines the NAD(+) pocket.

Belongs to the urocanase family. It depends on NAD(+) as a cofactor.

The protein resides in the cytoplasm. It catalyses the reaction 4-imidazolone-5-propanoate = trans-urocanate + H2O. It participates in amino-acid degradation; L-histidine degradation into L-glutamate; N-formimidoyl-L-glutamate from L-histidine: step 2/3. In terms of biological role, catalyzes the conversion of urocanate to 4-imidazolone-5-propionate. This Stenotrophomonas maltophilia (strain R551-3) protein is Urocanate hydratase.